Reading from the N-terminus, the 346-residue chain is Phosphoribosylformylglycinamidine cyclo-ligase (346 aa).

The protein belongs to the AIR synthase family.

Its subcellular location is the cytoplasm. It carries out the reaction 2-formamido-N(1)-(5-O-phospho-beta-D-ribosyl)acetamidine + ATP = 5-amino-1-(5-phospho-beta-D-ribosyl)imidazole + ADP + phosphate + H(+). The protein operates within purine metabolism; IMP biosynthesis via de novo pathway; 5-amino-1-(5-phospho-D-ribosyl)imidazole from N(2)-formyl-N(1)-(5-phospho-D-ribosyl)glycinamide: step 2/2. This chain is Phosphoribosylformylglycinamidine cyclo-ligase, found in Prochlorococcus marinus (strain NATL2A).